A 202-amino-acid chain; its full sequence is Putative chromophore lyase CpcV (202 aa).

Belongs to the CpcS/CpeS biliprotein lyase family.

In terms of biological role, covalently attaches a chromophore to Cys residue(s) of phycobiliproteins. In Picosynechococcus sp. (strain ATCC 27264 / PCC 7002 / PR-6) (Agmenellum quadruplicatum), this protein is Putative chromophore lyase CpcV (cpcV).